The following is a 55-amino-acid chain: Large ribosomal subunit protein bL33 (55 aa).

Belongs to the bacterial ribosomal protein bL33 family.

This is Large ribosomal subunit protein bL33 from Bifidobacterium longum (strain DJO10A).